A 50-amino-acid polypeptide reads, in one-letter code: DEAQFKECYDTCHKECSDKGNGFTFCEMKCDTDCSVKDVKEKLENYKPKN.

Intrachain disulfides connect Cys8–Cys34, Cys12–Cys30, and Cys16–Cys26.

Expressed in pollen.

The polypeptide is Major pollen allergen Ole e 6 (OLE6) (Olea europaea (Common olive)).